Consider the following 317-residue polypeptide: Eukaryotic translation initiation factor 2 subunit 2 (317 aa).

Residues 1–146 (MSATEEENVL…KEKTITTSDG (146 aa)) are disordered. The span at 79–90 (AIEKLENEGAHD) shows a compositional bias: basic and acidic residues. Over residues 109–125 (KSSTTTTTSTTTTTTEP) the composition is skewed to low complexity. A C4-type zinc finger spans residues 222 to 246 (HVYNYVFAELGTNGSIDGNQRLVIR).

This sequence belongs to the eIF-2-beta/eIF-5 family. As to quaternary structure, eukaryotic translation initiation factor 2 eIF2 is a heterotrimeric complex composed of an alpha, a beta and a gamma subunit.

Its subcellular location is the cytoplasm. The protein resides in the cytosol. In terms of biological role, component of the eIF2 complex that functions in the early steps of protein synthesis by forming a ternary complex with GTP and initiator tRNA. This complex binds to a 40S ribosomal subunit, followed by mRNA binding to form a 43S pre-initiation complex (43S PIC). Junction of the 60S ribosomal subunit to form the 80S initiation complex is preceded by hydrolysis of the GTP bound to eIF2 and release of an eIF2-GDP binary complex. In order for eIF2 to recycle and catalyze another round of initiation, the GDP bound to eIF2 must exchange with GTP by way of a reaction catalyzed by eIF2B. This chain is Eukaryotic translation initiation factor 2 subunit 2 (eif2s2), found in Dictyostelium discoideum (Social amoeba).